The chain runs to 339 residues: MISFNNVSKVYESGGQSVHAVEDVTLSVEKGEIFGIIGFSGAGKSTLLRLVNMLERPTAGTISIDDKEITSLSTKELRKLRQRIGMIFQSFNLFNSRTVFGNIAYPLRLAKVPKNEIKERVNELLKFVGLEDKANNYPEQLSGGQKQRVGIARALATSPDILICDEATSALDPETTTEILNLLKKVNREYNLTILLITHEMHVVKEICHRVAVMEKGKVIEEGKLFDVFTQPKTKTTQNFVRSVINDHLPESVLAKIQNGGQIYRLTFTGEETGQPVLSYIAKNYNVDVNVLYGNIIELQNVLFGNLLVELQGEQREIQKALQHLRLQVQLKEVEAHAS.

The ABC transporter domain occupies 2-241; that stretch reads ISFNNVSKVY…PKTKTTQNFV (240 aa). 38 to 45 provides a ligand contact to ATP; sequence GFSGAGKS.

The protein belongs to the ABC transporter superfamily. Methionine importer (TC 3.A.1.24) family. In terms of assembly, the complex is composed of two ATP-binding proteins (MetN), two transmembrane proteins (MetI) and a solute-binding protein (MetQ).

It is found in the cell membrane. The enzyme catalyses L-methionine(out) + ATP + H2O = L-methionine(in) + ADP + phosphate + H(+). The catalysed reaction is D-methionine(out) + ATP + H2O = D-methionine(in) + ADP + phosphate + H(+). Part of the ABC transporter complex MetNIQ involved in methionine import. Responsible for energy coupling to the transport system. This Bacillus cereus (strain ZK / E33L) protein is Methionine import ATP-binding protein MetN 2.